Here is a 229-residue protein sequence, read N- to C-terminus: 7-cyano-7-deazaguanine synthase (229 aa).

Residue Cys-8–Ala-18 coordinates ATP. Zn(2+) is bound by residues Cys-190, Cys-203, Cys-206, and Cys-209.

It belongs to the QueC family. Zn(2+) is required as a cofactor.

The enzyme catalyses 7-carboxy-7-deazaguanine + NH4(+) + ATP = 7-cyano-7-deazaguanine + ADP + phosphate + H2O + H(+). It participates in purine metabolism; 7-cyano-7-deazaguanine biosynthesis. Catalyzes the ATP-dependent conversion of 7-carboxy-7-deazaguanine (CDG) to 7-cyano-7-deazaguanine (preQ(0)). This Methanopyrus kandleri (strain AV19 / DSM 6324 / JCM 9639 / NBRC 100938) protein is 7-cyano-7-deazaguanine synthase.